A 76-amino-acid chain; its full sequence is Small ribosomal subunit protein bS18 (76 aa).

Belongs to the bacterial ribosomal protein bS18 family. As to quaternary structure, part of the 30S ribosomal subunit. Forms a tight heterodimer with protein bS6.

In terms of biological role, binds as a heterodimer with protein bS6 to the central domain of the 16S rRNA, where it helps stabilize the platform of the 30S subunit. In Methylococcus capsulatus (strain ATCC 33009 / NCIMB 11132 / Bath), this protein is Small ribosomal subunit protein bS18.